The following is a 347-amino-acid chain: 3',5'-bisphosphate nucleotidase 2 (347 aa).

D46 functions as the Proton acceptor in the catalytic mechanism. Residues E71, D134, I136, and D137 each coordinate Mg(2+). The Proton acceptor role is filled by T139. Adenosine 3',5'-bisphosphate-binding residues include T139, S255, K258, R272, and D284. AMP is bound by residues S255, K258, R272, and D284. Residue D284 coordinates Mg(2+).

This sequence belongs to the inositol monophosphatase superfamily. Mg(2+) is required as a cofactor. In terms of tissue distribution, very low expression in roots, leaves, stems, flowers and siliques.

It catalyses the reaction adenosine 3',5'-bisphosphate + H2O = AMP + phosphate. The catalysed reaction is 3'-phosphoadenylyl sulfate + H2O = adenosine 5'-phosphosulfate + phosphate. It carries out the reaction 1D-myo-inositol 1,4-bisphosphate + H2O = 1D-myo-inositol 4-phosphate + phosphate. The protein operates within signal transduction; phosphatidylinositol signaling pathway. Inhibited by Li(+) (IC(50)=10 mM), Na(+) (IC(50)=200 mM) and Ca(2+) (IC(50)=0.03 mM). Phosphatase that converts adenosine 3'-phosphate 5'-phosphosulfate (PAPS) to adenosine 5'-phosphosulfate (APS) and 3'-phosphoadenosine 5'-phosphate (3'-PAP) to AMP. May regulate the flux of sulfur in the sulfur-activation pathway by converting PAPS to APS. Prevents both the toxicity of PAP on RNA processing enzymes as well as the product inhibition by PAP of sulfate conjugation. Is also able to hydrolyze inositol 1,4-bisphosphate. The polypeptide is 3',5'-bisphosphate nucleotidase 2 (Arabidopsis thaliana (Mouse-ear cress)).